Consider the following 294-residue polypeptide: Lipoyl synthase (294 aa).

Cysteine 38, cysteine 43, cysteine 49, cysteine 64, cysteine 68, cysteine 71, and serine 277 together coordinate [4Fe-4S] cluster. The 217-residue stretch at 50–266 (WSRGTATFLL…RSFAEGAGFR (217 aa)) folds into the Radical SAM core domain.

This sequence belongs to the radical SAM superfamily. Lipoyl synthase family. [4Fe-4S] cluster serves as cofactor.

It is found in the cytoplasm. It catalyses the reaction [[Fe-S] cluster scaffold protein carrying a second [4Fe-4S](2+) cluster] + N(6)-octanoyl-L-lysyl-[protein] + 2 oxidized [2Fe-2S]-[ferredoxin] + 2 S-adenosyl-L-methionine + 4 H(+) = [[Fe-S] cluster scaffold protein] + N(6)-[(R)-dihydrolipoyl]-L-lysyl-[protein] + 4 Fe(3+) + 2 hydrogen sulfide + 2 5'-deoxyadenosine + 2 L-methionine + 2 reduced [2Fe-2S]-[ferredoxin]. The protein operates within protein modification; protein lipoylation via endogenous pathway; protein N(6)-(lipoyl)lysine from octanoyl-[acyl-carrier-protein]: step 2/2. Functionally, catalyzes the radical-mediated insertion of two sulfur atoms into the C-6 and C-8 positions of the octanoyl moiety bound to the lipoyl domains of lipoate-dependent enzymes, thereby converting the octanoylated domains into lipoylated derivatives. In Pelodictyon phaeoclathratiforme (strain DSM 5477 / BU-1), this protein is Lipoyl synthase.